The following is a 712-amino-acid chain: MSDSDREIIGLINNFFLKAALLLEQCKVVARGGGFDGEEPLRDGNHLFNIETRGDPTLEAQIQPWTTFDGEKSMPPLVLETFLDLRGLHSNQTVYLHDSDGNPWMVCKGGKKSEIVLERWLIELDRQFSSTTGSTDAAEDDEYNEFNDPENLHKQLVLLFRYLYTLTQLLPANDIITKLQASQQGTAQATTTTGTLKPLHIHTRLLDGSKPILSKGRVGLSKPIIASYSNTMNETNIASHLEQRKITPIKTKFGSLRITVSYRKDVDFYVIDQEDPYKRTTNVSALQDTVTATDRRISSNSNISISVSPKTTNMLNANHIPVDSSGGGFARRQSISSKLQPFKVGSVGSGSFVQSGSLQSVTNPNPSLSRNVSSSSVAAALKVQRGSAGSTVLNSDLPPELSSVGSGSKYSSSFGRIRRHSSVRRSESIDRTAKPRKSNETPPEDLLEFVKLLEDKKELNMKPSTILPQQDISSSLIKFQSMKPNNDTLSDNLSMSMSIDQPNMRMGSNSHSPIPSFSPNYGSIPSRLSQGSRNNSNVELITSRKSSLDRHRLSLLNRTGSNVDIRRGSVGTMETTNEDSKEDEDSHVHGLRFNSGTVNDKTEDNNEDDDEEEILIKRSSNAVASSTEHFSVSPRSARSISVSSYTRSQLPLKHPNFSYPTTSATTAHAKFHKSEVIPDQLHREGSHHHNSSHKNDEDDDLLFVMSDMNLTN.

2 disordered regions span residues 388-443 and 568-611; these read AGST…ETPP and GSVG…DDDE. A compositionally biased stretch (low complexity) spans 402-415; the sequence is SSVGSGSKYSSSFG. The tract at residues 412–420 is ATG17-binding; that stretch reads SSFGRIRRH. The span at 424–439 shows a compositional bias: basic and acidic residues; that stretch reads RRSESIDRTAKPRKSN. The ATG1-binding stretch occupies residues 441–500; sequence TPPEDLLEFVKLLEDKKELNMKPSTILPQQDISSSLIKFQSMKPNNDTLSDNLSMSMSID. Residues 576–585 are compositionally biased toward acidic residues; sequence TNEDSKEDED.

It belongs to the ATG13 family. Fungi subfamily. As to quaternary structure, hypophosphorylated form interacts with ATG1 to form the ATG1-ATG13 kinase complex. The ATG1-ATG13 complex interacts with the ATG17-ATG29-ATG31 complex through direct interaction with ATG17. Interacts with VAC8. Hyperphosphorylated under nutrient-rich conditions. Starvation and TOR inactivation results in ATG13 partial dephosphorylation leading to ATG1-binding. Dephosphorylation induces ATG17-binding.

The protein localises to the cytoplasm. It is found in the preautophagosomal structure. Activates the ATG1 kinase in a nutritional condition dependent manner through the TOR pathway, leading to autophagy. Involved in ATG9 and ATG23 cycling through the pre-autophagosomal structure. Also involved in cytoplasm to vacuole transport (Cvt) and more specifically in Cvt vesicle formation. Seems to play a role in the switching machinery regulating the conversion between the Cvt pathway and autophagy. Finally, ATG13 is also required for glycogen storage during stationary phase. This is Autophagy-related protein 13 from Kluyveromyces marxianus (strain DMKU3-1042 / BCC 29191 / NBRC 104275) (Yeast).